A 647-amino-acid polypeptide reads, in one-letter code: Acetyl-coenzyme A synthetase (647 aa).

CoA contacts are provided by residues 190-193, T310, and N334; that span reads RGGK. ATP is bound by residues 386 to 388, 410 to 415, D499, and R514; these read GEP and DTWWQT. Position 522 (S522) interacts with CoA. Residue R525 participates in ATP binding. V536, H538, and V541 together coordinate Mg(2+). R583 lines the CoA pocket. K608 carries the post-translational modification N6-acetyllysine.

Belongs to the ATP-dependent AMP-binding enzyme family. Requires Mg(2+) as cofactor. Acetylated. Deacetylation by the SIR2-homolog deacetylase activates the enzyme.

The enzyme catalyses acetate + ATP + CoA = acetyl-CoA + AMP + diphosphate. Functionally, catalyzes the conversion of acetate into acetyl-CoA (AcCoA), an essential intermediate at the junction of anabolic and catabolic pathways. AcsA undergoes a two-step reaction. In the first half reaction, AcsA combines acetate with ATP to form acetyl-adenylate (AcAMP) intermediate. In the second half reaction, it can then transfer the acetyl group from AcAMP to the sulfhydryl group of CoA, forming the product AcCoA. The protein is Acetyl-coenzyme A synthetase of Xanthomonas campestris pv. campestris (strain 8004).